The following is a 122-amino-acid chain: Large ribosomal subunit protein uL14c (122 aa).

This sequence belongs to the universal ribosomal protein uL14 family. As to quaternary structure, part of the 50S ribosomal subunit.

It localises to the plastid. The protein localises to the chloroplast. Functionally, binds to 23S rRNA. The polypeptide is Large ribosomal subunit protein uL14c (Chlamydomonas reinhardtii (Chlamydomonas smithii)).